The primary structure comprises 129 residues: Copper chaperone GriE (129 aa).

The segment at residues 1-37 (MPMNRREMVMATTGAALAAAAAVPLLSGGEGEGAAEA) is a signal peptide (tat-type signal). The disordered stretch occupies residues 32–51 (EGAAEAAAAPAKATGRGREH). Over residues 34-45 (AAEAAAAPAKAT) the composition is skewed to low complexity.

The protein belongs to the melC1 family. In terms of processing, predicted to be exported by the Tat system. The position of the signal peptide cleavage has not been experimentally proven.

Its function is as follows. Involved in the transfer of Cu(2+) ions to the apo form of o-aminophenol oxidase GriF in the grixazone biosynthetic pathway. The chain is Copper chaperone GriE (griE) from Streptomyces griseus subsp. griseus (strain JCM 4626 / CBS 651.72 / NBRC 13350 / KCC S-0626 / ISP 5235).